A 310-amino-acid polypeptide reads, in one-letter code: Coproporphyrin III ferrochelatase (310 aa).

Residues tyrosine 13, arginine 30, 46-47, serine 54, and tyrosine 125 each bind Fe-coproporphyrin III; that span reads RY. Fe(2+) contacts are provided by histidine 181 and glutamate 262.

It belongs to the ferrochelatase family.

The protein resides in the cytoplasm. The enzyme catalyses Fe-coproporphyrin III + 2 H(+) = coproporphyrin III + Fe(2+). The protein operates within porphyrin-containing compound metabolism; protoheme biosynthesis. Functionally, involved in coproporphyrin-dependent heme b biosynthesis. Catalyzes the insertion of ferrous iron into coproporphyrin III to form Fe-coproporphyrin III. The sequence is that of Coproporphyrin III ferrochelatase from Halalkalibacterium halodurans (strain ATCC BAA-125 / DSM 18197 / FERM 7344 / JCM 9153 / C-125) (Bacillus halodurans).